A 302-amino-acid chain; its full sequence is Putative gluconeogenesis factor (302 aa).

This sequence belongs to the gluconeogenesis factor family.

The protein resides in the cytoplasm. Functionally, required for morphogenesis under gluconeogenic growth conditions. The chain is Putative gluconeogenesis factor (ybhK) from Salmonella typhimurium (strain LT2 / SGSC1412 / ATCC 700720).